The sequence spans 66 residues: uncharacterized protein (66 aa).

This is an uncharacterized protein from Human cytomegalovirus (strain AD169) (HHV-5).